Reading from the N-terminus, the 141-residue chain is Prefoldin subunit alpha (141 aa).

Belongs to the prefoldin subunit alpha family. As to quaternary structure, heterohexamer of two alpha and four beta subunits.

Its subcellular location is the cytoplasm. Functionally, molecular chaperone capable of stabilizing a range of proteins. Seems to fulfill an ATP-independent, HSP70-like function in archaeal de novo protein folding. The chain is Prefoldin subunit alpha (pfdA) from Methanothermobacter thermautotrophicus (strain ATCC 29096 / DSM 1053 / JCM 10044 / NBRC 100330 / Delta H) (Methanobacterium thermoautotrophicum).